A 79-amino-acid chain; its full sequence is MSSGGLLLLLGLLTLWEVLTPVSSKDRPKFYELPADIGPCEDFTGAFHYSPREHEYIEFIYGGCEGNANNFNTLEECET.

The signal sequence occupies residues 1 to 24 (MSSGGLLLLLGLLTLWEVLTPVSS). Residues 31–79 (YELPADIGPCEDFTGAFHYSPREHEYIEFIYGGCEGNANNFNTLEECET) form the BPTI/Kunitz inhibitor domain. An intrachain disulfide couples Cys-40 to Cys-64.

It is found in the secreted. Its function is as follows. Serine protease inhibitor. The polypeptide is Scutellin-5 (Oxyuranus scutellatus scutellatus (Australian taipan)).